A 64-amino-acid chain; its full sequence is Large ribosomal subunit protein bL35 (64 aa).

Composition is skewed to basic residues over residues 1–26 (MPKM…KRSK) and 33–44 (LTKKSPKRKRKL). The segment at 1–44 (MPKMKTHRGAAKRFKKTGTGKIKRSKAYTSHILTKKSPKRKRKL) is disordered.

The protein belongs to the bacterial ribosomal protein bL35 family.

The polypeptide is Large ribosomal subunit protein bL35 (Alkaliphilus oremlandii (strain OhILAs) (Clostridium oremlandii (strain OhILAs))).